Consider the following 274-residue polypeptide: Cytochrome b-c1 complex subunit Rieske, mitochondrial (274 aa).

Residues 79–103 (SHTDIKVPDFSDYRRSEVLDTTKSS) are Mitochondrial matrix-facing. The helical transmembrane segment at 104-140 (RESSDARKGFSYLVTATTAVGVTYAAKSIVTQFVSSM) threads the bilayer. Over 141–274 (SASADVLAMS…FTSDDLVIVG (134 aa)) the chain is Mitochondrial intermembrane. The Rieske domain occupies 187–272 (EAAVELSQLR…YEFTSDDLVI (86 aa)). [2Fe-2S] cluster-binding residues include Cys-217, His-219, Cys-236, His-239, and Ser-241. Cys-222 and Cys-238 are joined by a disulfide.

This sequence belongs to the Rieske iron-sulfur protein family. Component of the ubiquinol-cytochrome c oxidoreductase (cytochrome b-c1 complex, complex III, CIII), a multisubunit enzyme composed of 11 subunits. The complex is composed of 3 respiratory subunits cytochrome b, cytochrome c1 and Rieske protein UQCRFS1, 2 core protein subunits UQCRC1/QCR1 and UQCRC2/QCR2, and 6 low-molecular weight protein subunits UQCRH/QCR6, UQCRB/QCR7, UQCRQ/QCR8, UQCR10/QCR9, UQCR11/QCR10 and subunit 9, the cleavage product of Rieske protein UQCRFS1. The complex exists as an obligatory dimer and forms supercomplexes (SCs) in the inner mitochondrial membrane with NADH-ubiquinone oxidoreductase (complex I, CI) and cytochrome c oxidase (complex IV, CIV), resulting in different assemblies (supercomplex SCI(1)III(2)IV(1) and megacomplex MCI(2)III(2)IV(2)). Incorporation of the Rieske protein UQCRFS1 is the penultimate step in complex III assembly. Interacts with TTC19, which is involved in the clearance of UQCRFS1 fragments. In terms of assembly, component of the ubiquinol-cytochrome c oxidoreductase (cytochrome b-c1 complex, complex III, CIII). Subunit 9 corresponds to the mitochondrial targeting sequence (MTS) of Rieske protein UQCRFS1. It is retained after processing and incorporated inside complex III, where it remains bound to the complex and localizes between the 2 core subunits UQCRC1/QCR1 and UQCRC2/QCR2. The cofactor is [2Fe-2S] cluster. In terms of processing, proteolytic processing is necessary for the correct insertion of UQCRFS1 in the complex III dimer. Several fragments are generated during UQCRFS1 insertion, most probably due to the endogenous matrix-processing peptidase (MPP) activity of the 2 core protein subunits UQCRC1/QCR1 and UQCRC2/QCR2, which are homologous to the 2 mitochondrial-processing peptidase (MPP) subunits beta-MPP and alpha-MPP respectively. The action of the protease is also necessary for the clearance of the UQCRFS1 fragments.

Its subcellular location is the mitochondrion inner membrane. It catalyses the reaction a quinol + 2 Fe(III)-[cytochrome c](out) = a quinone + 2 Fe(II)-[cytochrome c](out) + 2 H(+)(out). Its function is as follows. Component of the ubiquinol-cytochrome c oxidoreductase, a multisubunit transmembrane complex that is part of the mitochondrial electron transport chain which drives oxidative phosphorylation. The respiratory chain contains 3 multisubunit complexes succinate dehydrogenase (complex II, CII), ubiquinol-cytochrome c oxidoreductase (cytochrome b-c1 complex, complex III, CIII) and cytochrome c oxidase (complex IV, CIV), that cooperate to transfer electrons derived from NADH and succinate to molecular oxygen, creating an electrochemical gradient over the inner membrane that drives transmembrane transport and the ATP synthase. The cytochrome b-c1 complex catalyzes electron transfer from ubiquinol to cytochrome c, linking this redox reaction to translocation of protons across the mitochondrial inner membrane, with protons being carried across the membrane as hydrogens on the quinol. In the process called Q cycle, 2 protons are consumed from the matrix, 4 protons are released into the intermembrane space and 2 electrons are passed to cytochrome c. The Rieske protein is a catalytic core subunit containing a [2Fe-2S] iron-sulfur cluster. It cycles between 2 conformational states during catalysis to transfer electrons from the quinol bound in the Q(0) site in cytochrome b to cytochrome c1. Incorporation of UQCRFS1 is the penultimate step in complex III assembly. Functionally, component of the ubiquinol-cytochrome c oxidoreductase (cytochrome b-c1 complex, complex III, CIII). UQCRFS1 undergoes proteolytic processing once it is incorporated in the complex III dimer. One of the fragments, called subunit 9, corresponds to its mitochondrial targeting sequence (MTS). The proteolytic processing is necessary for the correct insertion of UQCRFS1 in the complex III dimer, but the persistence of UQCRFS1-derived fragments may prevent newly imported UQCRFS1 to be processed and assembled into complex III and is detrimental for the complex III structure and function. The chain is Cytochrome b-c1 complex subunit Rieske, mitochondrial (UQCRFS1) from Aotus azarae (Azara's night monkey).